Reading from the N-terminus, the 493-residue chain is Cytochrome P450 710A4 (493 aa).

Residues 5–25 form a helical membrane-spanning segment; the sequence is VSLFASLTPYLVSALLLFLLL. Cys-435 provides a ligand contact to heme.

The protein belongs to the cytochrome P450 family. Requires heme as cofactor. As to expression, very weak expression in roots and root hairs. Not detected in the root tips.

The protein localises to the membrane. It catalyses the reaction 5-dehydroepisterol + NADPH + O2 + H(+) = ergosta-5,7,22,24(28)-tetraen-3beta-ol + NADP(+) + 2 H2O. It participates in steroid biosynthesis; sterol biosynthesis. Required to form the C-22 double bond in the sterol side chain. Possesses C-22 desaturase activity toward beta-sitosterol and produces stigmasterol. The sequence is that of Cytochrome P450 710A4 from Arabidopsis thaliana (Mouse-ear cress).